A 259-amino-acid chain; its full sequence is Phosphate import ATP-binding protein PstB 2 (259 aa).

The ABC transporter domain occupies 12-254; that stretch reads ISARGLNVHY…PKEPLTQGYI (243 aa). 44–51 provides a ligand contact to ATP; that stretch reads GPSGCGKS.

The protein belongs to the ABC transporter superfamily. Phosphate importer (TC 3.A.1.7) family. In terms of assembly, the complex is composed of two ATP-binding proteins (PstB), two transmembrane proteins (PstC and PstA) and a solute-binding protein (PstS).

It localises to the cell inner membrane. The enzyme catalyses phosphate(out) + ATP + H2O = ADP + 2 phosphate(in) + H(+). Its function is as follows. Part of the ABC transporter complex PstSACB involved in phosphate import. Responsible for energy coupling to the transport system. The protein is Phosphate import ATP-binding protein PstB 2 of Paramagnetospirillum magneticum (strain ATCC 700264 / AMB-1) (Magnetospirillum magneticum).